Reading from the N-terminus, the 208-residue chain is Superoxide dismutase [Mn] (208 aa).

Mn(2+)-binding residues include His-27, His-81, Asp-168, and His-172.

The protein belongs to the iron/manganese superoxide dismutase family. Homodimer. Mn(2+) is required as a cofactor.

The enzyme catalyses 2 superoxide + 2 H(+) = H2O2 + O2. Functionally, destroys superoxide anion radicals which are normally produced within the cells and which are toxic to biological systems. The polypeptide is Superoxide dismutase [Mn] (sodA) (Buchnera aphidicola subsp. Baizongia pistaciae (strain Bp)).